The following is a 166-amino-acid chain: MGEPLGLLQVTVIQGKKLVIRDFKSSDPYVIVKLGNESAKTKVINNCLNPVWNEELNFTLKDPAAVLALEVFDKDRFKADDKMGHASLSLQPLISVARLRHVVRVSSGETTLRKVLPDPENCVSRESTISCIDGEVVQSVWLRLCAVESGEIELKIKLIDPPGTNK.

Residue methionine 1 is modified to N-acetylmethionine. The C2 domain maps to 1 to 103; that stretch reads MGEPLGLLQV…ISVARLRHVV (103 aa). Glycine 2 bears the N-acetylglycine; in Protein C2-DOMAIN ABA-RELATED 11, N-terminally processed mark. Ca(2+) is bound by residues arginine 21, aspartate 22, aspartate 27, aspartate 73, lysine 74, aspartate 75, and aspartate 81.

It belongs to the plant CAR protein family. Binds to PYR/PYL/RCAR abscisic acid intracellular receptors in an ABA-independent manner, both at the plasma membrane and in the nucleus.

It localises to the cell membrane. The protein localises to the nucleus. Stimulates the GTPase/ATPase activities of Obg-like ATPases. Mediates the transient calcium-dependent interaction of PYR/PYL/RCAR abscisic acid (ABA) receptors with the plasma membrane and thus regulates ABA sensitivity. This chain is Protein C2-DOMAIN ABA-RELATED 11, found in Arabidopsis thaliana (Mouse-ear cress).